The sequence spans 196 residues: Imidazoleglycerol-phosphate dehydratase (196 aa).

This sequence belongs to the imidazoleglycerol-phosphate dehydratase family.

Its subcellular location is the cytoplasm. It catalyses the reaction D-erythro-1-(imidazol-4-yl)glycerol 3-phosphate = 3-(imidazol-4-yl)-2-oxopropyl phosphate + H2O. It functions in the pathway amino-acid biosynthesis; L-histidine biosynthesis; L-histidine from 5-phospho-alpha-D-ribose 1-diphosphate: step 6/9. This chain is Imidazoleglycerol-phosphate dehydratase, found in Phenylobacterium zucineum (strain HLK1).